We begin with the raw amino-acid sequence, 261 residues long: Kallikrein-2 (261 aa).

Positions 1–18 are cleaved as a signal peptide; it reads MWDLVLSIALSVGCTGAV. A propeptide spans 19 to 24 (activation peptide); the sequence is PLIQSR. Residues 25-258 form the Peptidase S1 domain; it reads IVGGWECEKH…YRKWIKDTIA (234 aa). 5 disulfide bridges follow: C31-C173, C50-C66, C152-C219, C184-C198, and C209-C234. H65 acts as the Charge relay system in catalysis. A glycan (N-linked (GlcNAc...) asparagine) is linked at N102. D120 serves as the catalytic Charge relay system. S213 functions as the Charge relay system in the catalytic mechanism.

The protein belongs to the peptidase S1 family. Kallikrein subfamily.

The catalysed reaction is Preferential cleavage of Arg-|-Xaa bonds in small molecule substrates. Highly selective action to release kallidin (lysyl-bradykinin) from kininogen involves hydrolysis of Met-|-Xaa or Leu-|-Xaa.. Glandular kallikreins cleave Met-Lys and Arg-Ser bonds in kininogen to release Lys-bradykinin. The polypeptide is Kallikrein-2 (KLK2) (Homo sapiens (Human)).